A 445-amino-acid chain; its full sequence is MDIQNIKETIAMIEEQNFDIRTITMGISLLDCIDADIDKAAEKIYQKIVNKAGKLVEVGNEIGHELGIKIVNKRVSVTPIAIIGAATAADDYTPLALAMDRAAKEIGIDFIGGYSALVQKGYQKGDEILIKSMPKALAATERVCASVNVGSTKSGINMTAVRDMGETIKIMSKGDKWLNAKLVVFANAVEDNPFMAGAFHGVGEADTIINVGVSGPGVVKRALEKVRGESFDILAETIKKTAFKITRIGQLVGQMASERLNVEFGIVDLSLAPTPAIGDSVARVLEEMGLETVGTHGTTAALAMLNDAVKKGGVMAAERVGGLSGAFIPVSEDEGMIAAVNSGALNIEKLEAMTCVCSVGLDMIAIPEETPASTIAAMIADEAAIGVINQKTTAVRIIPMGKEGEQIEFGGLFGVAPVMRVNKASSADFIARGGQIPAPIHSFKN.

Belongs to the UPF0210 family. As to quaternary structure, homodimer.

This is UPF0210 protein LACR_1020 from Lactococcus lactis subsp. cremoris (strain SK11).